A 294-amino-acid polypeptide reads, in one-letter code: ATP synthase gamma chain (294 aa).

The protein belongs to the ATPase gamma chain family. As to quaternary structure, F-type ATPases have 2 components, CF(1) - the catalytic core - and CF(0) - the membrane proton channel. CF(1) has five subunits: alpha(3), beta(3), gamma(1), delta(1), epsilon(1). CF(0) has three main subunits: a, b and c.

The protein resides in the cell inner membrane. In terms of biological role, produces ATP from ADP in the presence of a proton gradient across the membrane. The gamma chain is believed to be important in regulating ATPase activity and the flow of protons through the CF(0) complex. The protein is ATP synthase gamma chain of Campylobacter jejuni subsp. jejuni serotype O:6 (strain 81116 / NCTC 11828).